A 489-amino-acid polypeptide reads, in one-letter code: IPT/TIG domain-containing protein BACOVA_02650 (489 aa).

A signal peptide spans 1–27 (MKSIYKYLDTRLFLIGLLVLPFLAVVS). A lipid anchor (N-palmitoyl cysteine) is attached at Cys28. Cys28 carries S-diacylglycerol cysteine lipidation. 3 consecutive IPT/TIG domains span residues 57 to 103 (VNPG…PNEL), 136 to 204 (PYIT…TAPA), and 232 to 304 (PVVT…AIGG).

It is found in the cell outer membrane. It functions in the pathway glucan metabolism; xyloglucan degradation. Polysaccharide-binding protein present at the surface of the cell. Probably mediates xyloglucan-binding before xyloglucan transport in the periplasm for degradation. The chain is IPT/TIG domain-containing protein BACOVA_02650 from Bacteroides ovatus (strain ATCC 8483 / DSM 1896 / JCM 5824 / BCRC 10623 / CCUG 4943 / NCTC 11153).